Consider the following 468-residue polypeptide: Ribulose bisphosphate carboxylase large chain (468 aa).

The residue at position 5 (Lys5) is an N6,N6,N6-trimethyllysine. Residues Asn114 and Thr164 each contribute to the substrate site. Residue Lys166 is the Proton acceptor of the active site. Lys168 contributes to the substrate binding site. Positions 192, 194, and 195 each coordinate Mg(2+). Position 192 is an N6-carboxylysine (Lys192). The active-site Proton acceptor is His285. Substrate is bound by residues Arg286, His318, and Ser370.

The protein belongs to the RuBisCO large chain family. Type I subfamily. In terms of assembly, heterohexadecamer of 8 large chains and 8 small chains; disulfide-linked. The disulfide link is formed within the large subunit homodimers. Mg(2+) is required as a cofactor. In terms of processing, the disulfide bond which can form in the large chain dimeric partners within the hexadecamer appears to be associated with oxidative stress and protein turnover.

The protein resides in the plastid. Its subcellular location is the chloroplast. The catalysed reaction is 2 (2R)-3-phosphoglycerate + 2 H(+) = D-ribulose 1,5-bisphosphate + CO2 + H2O. It carries out the reaction D-ribulose 1,5-bisphosphate + O2 = 2-phosphoglycolate + (2R)-3-phosphoglycerate + 2 H(+). Its function is as follows. RuBisCO catalyzes two reactions: the carboxylation of D-ribulose 1,5-bisphosphate, the primary event in carbon dioxide fixation, as well as the oxidative fragmentation of the pentose substrate in the photorespiration process. Both reactions occur simultaneously and in competition at the same active site. This is Ribulose bisphosphate carboxylase large chain from Solandra grandiflora (Chalice vine).